The sequence spans 279 residues: Small ribosomal subunit protein uS2 (279 aa).

The protein belongs to the universal ribosomal protein uS2 family. In terms of assembly, component of the small ribosomal subunit. Mature ribosomes consist of a small (40S) and a large (60S) subunit. The 40S subunit contains about 33 different proteins and 1 molecule of RNA (18S). The 60S subunit contains about 49 different proteins and 3 molecules of RNA (25S, 5.8S and 5S). Interacts with ribosomal protein S21.

The protein localises to the cytoplasm. In terms of biological role, required for the assembly and/or stability of the 40S ribosomal subunit. Required for the processing of the 20S rRNA-precursor to mature 18S rRNA in a late step of the maturation of 40S ribosomal subunits. This Chlamydomonas reinhardtii (Chlamydomonas smithii) protein is Small ribosomal subunit protein uS2.